Consider the following 385-residue polypeptide: 8-amino-7-oxononanoate synthase (385 aa).

Arg21 contributes to the substrate binding site. 108–109 (GF) lines the pyridoxal 5'-phosphate pocket. Position 133 (His133) interacts with substrate. 3 residues coordinate pyridoxal 5'-phosphate: Ser179, His207, and Thr233. At Lys236 the chain carries N6-(pyridoxal phosphate)lysine. Residue Thr352 participates in substrate binding.

Belongs to the class-II pyridoxal-phosphate-dependent aminotransferase family. BioF subfamily. In terms of assembly, homodimer. Pyridoxal 5'-phosphate is required as a cofactor.

The enzyme catalyses 6-carboxyhexanoyl-[ACP] + L-alanine + H(+) = (8S)-8-amino-7-oxononanoate + holo-[ACP] + CO2. It participates in cofactor biosynthesis; biotin biosynthesis. In terms of biological role, catalyzes the decarboxylative condensation of pimeloyl-[acyl-carrier protein] and L-alanine to produce 8-amino-7-oxononanoate (AON), [acyl-carrier protein], and carbon dioxide. This chain is 8-amino-7-oxononanoate synthase, found in Salmonella schwarzengrund (strain CVM19633).